The primary structure comprises 209 residues: Large ribosomal subunit protein bL25 (209 aa).

The tract at residues 188–209 (STSMEKEGEGSQEPTAAPSSEN) is disordered. Positions 199–209 (QEPTAAPSSEN) are enriched in polar residues.

Belongs to the bacterial ribosomal protein bL25 family. CTC subfamily. Part of the 50S ribosomal subunit; part of the 5S rRNA/L5/L18/L25 subcomplex. Contacts the 5S rRNA. Binds to the 5S rRNA independently of L5 and L18.

This is one of the proteins that binds to the 5S RNA in the ribosome where it forms part of the central protuberance. The chain is Large ribosomal subunit protein bL25 from Ehrlichia canis (strain Jake).